A 126-amino-acid polypeptide reads, in one-letter code: Aspartate 1-decarboxylase (126 aa).

The active-site Schiff-base intermediate with substrate; via pyruvic acid is Ser25. Pyruvic acid (Ser) is present on Ser25. Thr57 lines the substrate pocket. Residue Tyr58 is the Proton donor of the active site. 73–75 (GAA) is a substrate binding site.

This sequence belongs to the PanD family. Heterooctamer of four alpha and four beta subunits. Requires pyruvate as cofactor. Post-translationally, is synthesized initially as an inactive proenzyme, which is activated by self-cleavage at a specific serine bond to produce a beta-subunit with a hydroxyl group at its C-terminus and an alpha-subunit with a pyruvoyl group at its N-terminus.

It is found in the cytoplasm. The enzyme catalyses L-aspartate + H(+) = beta-alanine + CO2. It participates in cofactor biosynthesis; (R)-pantothenate biosynthesis; beta-alanine from L-aspartate: step 1/1. In terms of biological role, catalyzes the pyruvoyl-dependent decarboxylation of aspartate to produce beta-alanine. In Yersinia pseudotuberculosis serotype IB (strain PB1/+), this protein is Aspartate 1-decarboxylase.